Consider the following 245-residue polypeptide: Leucyl/phenylalanyl-tRNA--protein transferase (245 aa).

It belongs to the L/F-transferase family.

The protein localises to the cytoplasm. The enzyme catalyses N-terminal L-lysyl-[protein] + L-leucyl-tRNA(Leu) = N-terminal L-leucyl-L-lysyl-[protein] + tRNA(Leu) + H(+). It carries out the reaction N-terminal L-arginyl-[protein] + L-leucyl-tRNA(Leu) = N-terminal L-leucyl-L-arginyl-[protein] + tRNA(Leu) + H(+). It catalyses the reaction L-phenylalanyl-tRNA(Phe) + an N-terminal L-alpha-aminoacyl-[protein] = an N-terminal L-phenylalanyl-L-alpha-aminoacyl-[protein] + tRNA(Phe). In terms of biological role, functions in the N-end rule pathway of protein degradation where it conjugates Leu, Phe and, less efficiently, Met from aminoacyl-tRNAs to the N-termini of proteins containing an N-terminal arginine or lysine. This Paraburkholderia phymatum (strain DSM 17167 / CIP 108236 / LMG 21445 / STM815) (Burkholderia phymatum) protein is Leucyl/phenylalanyl-tRNA--protein transferase.